The following is a 452-amino-acid chain: 3-phosphoshikimate 1-carboxyvinyltransferase (452 aa).

Positions 1–23 are disordered; sequence MLNGSASKPATARKSAGLTGSVR. 3-phosphoshikimate is bound by residues lysine 28, serine 29, and arginine 33. Lysine 28 is a binding site for phosphoenolpyruvate. Positions 100 and 128 each coordinate phosphoenolpyruvate. The 3-phosphoshikimate site is built by serine 173, glutamine 175, aspartate 326, and lysine 353. Glutamine 175 is a phosphoenolpyruvate binding site. Aspartate 326 (proton acceptor) is an active-site residue. Residues arginine 357 and arginine 405 each contribute to the phosphoenolpyruvate site.

It belongs to the EPSP synthase family. Monomer.

The protein resides in the cytoplasm. The enzyme catalyses 3-phosphoshikimate + phosphoenolpyruvate = 5-O-(1-carboxyvinyl)-3-phosphoshikimate + phosphate. It participates in metabolic intermediate biosynthesis; chorismate biosynthesis; chorismate from D-erythrose 4-phosphate and phosphoenolpyruvate: step 6/7. Its function is as follows. Catalyzes the transfer of the enolpyruvyl moiety of phosphoenolpyruvate (PEP) to the 5-hydroxyl of shikimate-3-phosphate (S3P) to produce enolpyruvyl shikimate-3-phosphate and inorganic phosphate. This chain is 3-phosphoshikimate 1-carboxyvinyltransferase, found in Rhizobium johnstonii (strain DSM 114642 / LMG 32736 / 3841) (Rhizobium leguminosarum bv. viciae).